The sequence spans 340 residues: Probable dual-specificity RNA methyltransferase RlmN (340 aa).

Glu93 (proton acceptor) is an active-site residue. Residues 99 to 327 form the Radical SAM core domain; that stretch reads TAKRLTVCVS…VSVRYSRGLE (229 aa). An intrachain disulfide couples Cys106 to Cys332. [4Fe-4S] cluster-binding residues include Cys113, Cys117, and Cys120. S-adenosyl-L-methionine is bound by residues 160–161, Ser190, 213–215, and Asn289; these read GE and SLH. Cys332 (S-methylcysteine intermediate) is an active-site residue.

It belongs to the radical SAM superfamily. RlmN family. It depends on [4Fe-4S] cluster as a cofactor.

Its subcellular location is the cytoplasm. The enzyme catalyses adenosine(2503) in 23S rRNA + 2 reduced [2Fe-2S]-[ferredoxin] + 2 S-adenosyl-L-methionine = 2-methyladenosine(2503) in 23S rRNA + 5'-deoxyadenosine + L-methionine + 2 oxidized [2Fe-2S]-[ferredoxin] + S-adenosyl-L-homocysteine. It carries out the reaction adenosine(37) in tRNA + 2 reduced [2Fe-2S]-[ferredoxin] + 2 S-adenosyl-L-methionine = 2-methyladenosine(37) in tRNA + 5'-deoxyadenosine + L-methionine + 2 oxidized [2Fe-2S]-[ferredoxin] + S-adenosyl-L-homocysteine. Specifically methylates position 2 of adenine 2503 in 23S rRNA and position 2 of adenine 37 in tRNAs. This chain is Probable dual-specificity RNA methyltransferase RlmN, found in Rippkaea orientalis (strain PCC 8801 / RF-1) (Cyanothece sp. (strain PCC 8801)).